The chain runs to 68 residues: Copper transport protein ATOX1 (68 aa).

The region spanning 1–63 (MPKHEFSVDM…TLEKTGKAVS (63 aa)) is the HMA domain. 2 residues coordinate Cu cation: Cys-12 and Cys-15. Ser-47 is modified (phosphoserine). Lys-60 carries the N6-acetyllysine modification.

Belongs to the ATX1 family. In terms of assembly, homodimer. Interacts with ATP7B. Interacts with ATP7A. Interacts (via dimer form) with SLC31A1 (via C-terminal domain); this interaction improves ATOX1 stability and controls intracellular Cu(I) levels.

Its function is as follows. Binds and deliver cytosolic copper to the copper ATPase proteins. May be important in cellular antioxidant defense. The chain is Copper transport protein ATOX1 from Canis lupus familiaris (Dog).